A 767-amino-acid chain; its full sequence is Protein transport protein Sec23A (767 aa).

Zn(2+) contacts are provided by Cys-61, Cys-66, Cys-85, and Cys-88. One copy of the Gelsolin-like repeat lies at Pro-634 to Leu-720.

The protein belongs to the SEC23/SEC24 family. SEC23 subfamily. COPII is composed of at least five proteins: the Sec23/24 complex, the Sec13/31 complex and Sar1.

The protein resides in the cytoplasmic vesicle. It is found in the COPII-coated vesicle membrane. It localises to the endoplasmic reticulum membrane. Its subcellular location is the cytoplasm. The protein localises to the cytosol. In terms of biological role, component of the coat protein complex II (COPII) which promotes the formation of transport vesicles from the endoplasmic reticulum (ER). The coat has two main functions, the physical deformation of the endoplasmic reticulum membrane into vesicles and the selection of cargo molecules for their transport to the Golgi complex. The chain is Protein transport protein Sec23A from Gallus gallus (Chicken).